The sequence spans 601 residues: Elongation factor 4 (601 aa).

Positions 5 to 187 (IRKKNFCIIA…AICKYVPSPK (183 aa)) constitute a tr-type G domain. GTP-binding positions include 17–22 (DHGKST) and 134–137 (NKID).

It belongs to the TRAFAC class translation factor GTPase superfamily. Classic translation factor GTPase family. LepA subfamily.

It is found in the cell inner membrane. It catalyses the reaction GTP + H2O = GDP + phosphate + H(+). Its function is as follows. Required for accurate and efficient protein synthesis under certain stress conditions. May act as a fidelity factor of the translation reaction, by catalyzing a one-codon backward translocation of tRNAs on improperly translocated ribosomes. Back-translocation proceeds from a post-translocation (POST) complex to a pre-translocation (PRE) complex, thus giving elongation factor G a second chance to translocate the tRNAs correctly. Binds to ribosomes in a GTP-dependent manner. The polypeptide is Elongation factor 4 (Borreliella afzelii (strain PKo) (Borrelia afzelii)).